Reading from the N-terminus, the 256-residue chain is Complex I assembly factor TIMMDC1, mitochondrial (256 aa).

The disordered stretch occupies residues 1 to 27 (MAQSDPPKSPDPPLPTSIRNPQTPESG). Helical transmembrane passes span 111 to 131 (WGWR…GLTV) and 159 to 179 (VGLL…GALI).

The protein belongs to the Tim17/Tim22/Tim23 family. Associates with the intermediate 315 kDa subcomplex of incompletely assembled complex I.

It localises to the mitochondrion membrane. Its function is as follows. Chaperone protein involved in the assembly of the mitochondrial NADH:ubiquinone oxidoreductase complex (complex I). Participates in constructing the membrane arm of complex I. The protein is Complex I assembly factor TIMMDC1, mitochondrial (timmdc1) of Xenopus laevis (African clawed frog).